Consider the following 599-residue polypeptide: Group II intron-encoded protein LtrA (599 aa).

In terms of domain architecture, Reverse transcriptase spans 70-361; it reads IIQSLKDGTY…QPARFLGYDI (292 aa). Residues 381 to 549 form an intron maturase type-2 region; it reads NGSVELLIPL…AKCCELCGTS (169 aa).

This sequence in the N-terminal section; belongs to the bacterial reverse transcriptase family. As to quaternary structure, homodimer. Mg(2+) is required as a cofactor.

It catalyses the reaction DNA(n) + a 2'-deoxyribonucleoside 5'-triphosphate = DNA(n+1) + diphosphate. Multifunctional protein that promotes group II intron splicing and mobility by acting both on RNA and DNA. It has three activities: reverse transcriptase (RT) for intron duplication, maturase to promote splicing, and DNA endonuclease for site-specific cleavage of recipient alleles. The intron-encoded protein promotes splicing by facilitating the formation of the catalytically active structure of the intron RNA. After splicing, the protein remains bound to the excised intron lariat RNA, forming ribonucleoprotein particles, and cleaving the antisense strand of the recipient DNA in the 3' exon. After DNA cleavage, retrohoming occurs by a target DNA-primed reverse transcription of the intron RNA that had reverse spliced into the sense strand of the recipient DNA. It also contributes to the recognition of the DNA target site and acts as a repressor of its own translation. The polypeptide is Group II intron-encoded protein LtrA (ltrA) (Lactococcus lactis subsp. cremoris (Streptococcus cremoris)).